The chain runs to 103 residues: Cystatin-A (103 aa).

Met1 carries the post-translational modification N-acetylmethionine. The Secondary area of contact motif lies at Gln52 to Gly56.

This sequence belongs to the cystatin family.

The protein localises to the cytoplasm. Functionally, this is an intracellular thiol proteinase inhibitor. This Rattus norvegicus (Rat) protein is Cystatin-A (Csta).